We begin with the raw amino-acid sequence, 393 residues long: Fasciculation and elongation protein zeta-1 (393 aa).

The disordered stretch occupies residues methionine 1–proline 41. Serine 58 bears the Phosphoserine mark. The interval asparagine 130–aspartate 154 is disordered. Residues serine 231–serine 299 adopt a coiled-coil conformation. 2 positions are modified to phosphoserine: serine 299 and serine 317.

Belongs to the zygin family. In terms of assembly, homodimer. Interacts with UBE4B and SAP30L. Interacts with SCOC and ULK1; SCOC interferes with ULK1-binding to FEZ1. Directly interacts with SCOC and UVRAG. Stabilizes the interaction between SCOC and UVRAG during amino acid starvation. Interacts with the NH2-terminal variable region (V1) of PKC zeta and weakly with that of PKC epsilon. Post-translationally, phosphorylated by protein kinase C zeta; which enhances interaction with UBE4B and polyubiquitination. In terms of processing, polyubiquitinated in a UBE4B-dependent manner; which does not lead to proteasomal degradation and may be important for neurogenic activity. Polyubiquitin linkage seems to be mainly through Lys-26. Brain.

The protein localises to the cytoplasm. The protein resides in the cytoskeleton. It localises to the microtubule organizing center. It is found in the centrosome. Its subcellular location is the cell membrane. May be involved in axonal outgrowth as component of the network of molecules that regulate cellular morphology and axon guidance machinery. May participate in the transport of mitochondria and other cargos along microtubules. The polypeptide is Fasciculation and elongation protein zeta-1 (Fez1) (Rattus norvegicus (Rat)).